The primary structure comprises 370 residues: uncharacterized protein (370 aa).

10 helical membrane-spanning segments follow: residues 6–26 (AVVF…CLGN), 49–69 (IGIV…VAPF), 79–99 (SFAN…GEMA), 111–131 (FLGT…LGII), 143–163 (ILIG…CAGF), 167–187 (MIGK…FGLW), 206–226 (MVAI…IVLI), 236–256 (IQTT…TAFI), 307–327 (VAFA…VAGM), and 333–353 (AAMI…AAWM).

Belongs to the EutH family.

The protein resides in the cell membrane. This is an uncharacterized protein from Bacillus subtilis (strain 168).